Reading from the N-terminus, the 310-residue chain is Ribosomal RNA small subunit methyltransferase H (310 aa).

S-adenosyl-L-methionine contacts are provided by residues 33–35 (GGH), Asp52, Phe79, Asp98, and Gln105.

This sequence belongs to the methyltransferase superfamily. RsmH family.

Its subcellular location is the cytoplasm. The catalysed reaction is cytidine(1402) in 16S rRNA + S-adenosyl-L-methionine = N(4)-methylcytidine(1402) in 16S rRNA + S-adenosyl-L-homocysteine + H(+). In terms of biological role, specifically methylates the N4 position of cytidine in position 1402 (C1402) of 16S rRNA. In Campylobacter jejuni subsp. jejuni serotype O:6 (strain 81116 / NCTC 11828), this protein is Ribosomal RNA small subunit methyltransferase H.